A 569-amino-acid polypeptide reads, in one-letter code: Protein Noxp20 (569 aa).

Disordered stretches follow at residues 1-87 (MSDD…GEVT), 102-126 (GDTGSEIPLKEQDDAAVDPSSQAGR), and 165-208 (ANSA…GSRG). Phosphothreonine is present on threonine 197. Serine 262 carries the phosphoserine modification. Residues 404-439 (VSIDVAKGSEEEEKEEGKEEKAEEPEEDKTGGQGAK) are disordered.

Belongs to the FAM114 family. Over-expressed in brain. Also detected in lung, stomach, and in a lower extent in testis and thymus.

Its subcellular location is the cytoplasm. Functionally, may play a role in neuronal cell development. In Mus musculus (Mouse), this protein is Protein Noxp20 (Fam114a1).